Here is a 122-residue protein sequence, read N- to C-terminus: Putative protein adenylyltransferase MJ1547 (122 aa).

The short motif at 11–25 is the GSX(10)DXD motif element; that stretch reads GSYAKNEYTKRSDID. Residues aspartate 23, aspartate 25, and aspartate 48 each coordinate Mg(2+).

This sequence belongs to the MntA antitoxin family. In terms of assembly, probably forms a complex with cognate toxin MJ1548. Requires Mg(2+) as cofactor.

The enzyme catalyses L-tyrosyl-[protein] + ATP = O-(5'-adenylyl)-L-tyrosyl-[protein] + diphosphate. It catalyses the reaction O-(5'-adenylyl)-L-tyrosyl-[protein] + ATP = O-[5'-(adenylyl-(5'-&gt;3')-adenylyl)]-L-tyrosyl-[protein] + diphosphate. In terms of biological role, probable antitoxin component of a putative type VII toxin-antitoxin (TA) system. Neutralizes cognate toxic MJ1548 by di-AMPylation. In Methanocaldococcus jannaschii (strain ATCC 43067 / DSM 2661 / JAL-1 / JCM 10045 / NBRC 100440) (Methanococcus jannaschii), this protein is Putative protein adenylyltransferase MJ1547.